We begin with the raw amino-acid sequence, 100 residues long: Urease subunit gamma (100 aa).

The protein belongs to the urease gamma subunit family. Heterotrimer of UreA (gamma), UreB (beta) and UreC (alpha) subunits. Three heterotrimers associate to form the active enzyme.

The protein resides in the cytoplasm. It catalyses the reaction urea + 2 H2O + H(+) = hydrogencarbonate + 2 NH4(+). The protein operates within nitrogen metabolism; urea degradation; CO(2) and NH(3) from urea (urease route): step 1/1. This Burkholderia multivorans (strain ATCC 17616 / 249) protein is Urease subunit gamma.